Consider the following 500-residue polypeptide: Phenylalanine--tRNA ligase alpha subunit (500 aa).

L-phenylalanine-binding positions include threonine 343, 382-384 (QID), and phenylalanine 423. Glutamate 425 is a binding site for Mg(2+). Position 448 (phenylalanine 448) interacts with L-phenylalanine.

This sequence belongs to the class-II aminoacyl-tRNA synthetase family. Phe-tRNA synthetase alpha subunit type 2 subfamily. As to quaternary structure, tetramer of two alpha and two beta subunits. Mg(2+) serves as cofactor.

It localises to the cytoplasm. The enzyme catalyses tRNA(Phe) + L-phenylalanine + ATP = L-phenylalanyl-tRNA(Phe) + AMP + diphosphate + H(+). The protein is Phenylalanine--tRNA ligase alpha subunit of Pyrococcus abyssi (strain GE5 / Orsay).